The primary structure comprises 350 residues: Succinylglutamate desuccinylase (350 aa).

Zn(2+)-binding residues include His71, Glu74, and His169. The active site involves Glu233.

The protein belongs to the AspA/AstE family. Succinylglutamate desuccinylase subfamily. Requires Zn(2+) as cofactor.

The catalysed reaction is N-succinyl-L-glutamate + H2O = L-glutamate + succinate. Its pathway is amino-acid degradation; L-arginine degradation via AST pathway; L-glutamate and succinate from L-arginine: step 5/5. In terms of biological role, transforms N(2)-succinylglutamate into succinate and glutamate. This is Succinylglutamate desuccinylase from Pseudoalteromonas atlantica (strain T6c / ATCC BAA-1087).